Here is a 195-residue protein sequence, read N- to C-terminus: Holliday junction branch migration complex subunit RuvA (195 aa).

The domain I stretch occupies residues 1 to 63; the sequence is MIASVRGEVI…EDSMTLYGFV (63 aa). Positions 64-142 are domain II; sequence DGDARDLFLT…PVSAGGGAAV (79 aa). A flexible linker region spans residues 143–150; that stretch reads GGHAIRGP. A domain III region spans residues 150–195; it reads PVVEALVGLGFAAKQAEEATDKVLANDPEATTSSALRAALSMLGKK.

It belongs to the RuvA family. As to quaternary structure, homotetramer. Forms an RuvA(8)-RuvB(12)-Holliday junction (HJ) complex. HJ DNA is sandwiched between 2 RuvA tetramers; dsDNA enters through RuvA and exits via RuvB. An RuvB hexamer assembles on each DNA strand where it exits the tetramer. Each RuvB hexamer is contacted by two RuvA subunits (via domain III) on 2 adjacent RuvB subunits; this complex drives branch migration. In the full resolvosome a probable DNA-RuvA(4)-RuvB(12)-RuvC(2) complex forms which resolves the HJ.

The protein localises to the cytoplasm. Its function is as follows. The RuvA-RuvB-RuvC complex processes Holliday junction (HJ) DNA during genetic recombination and DNA repair, while the RuvA-RuvB complex plays an important role in the rescue of blocked DNA replication forks via replication fork reversal (RFR). RuvA specifically binds to HJ cruciform DNA, conferring on it an open structure. The RuvB hexamer acts as an ATP-dependent pump, pulling dsDNA into and through the RuvAB complex. HJ branch migration allows RuvC to scan DNA until it finds its consensus sequence, where it cleaves and resolves the cruciform DNA. In Mycolicibacterium smegmatis (strain ATCC 700084 / mc(2)155) (Mycobacterium smegmatis), this protein is Holliday junction branch migration complex subunit RuvA.